An 81-amino-acid polypeptide reads, in one-letter code: Photosystem I iron-sulfur center (81 aa).

4Fe-4S ferredoxin-type domains follow at residues 2 to 31 (VHVVKIYDTCIGCTQCVRACPCDVLEMVPW) and 39 to 68 (IASSPRTEDCIGCKRCETACPTDFLSIRVY). [4Fe-4S] cluster is bound by residues cysteine 11, cysteine 14, cysteine 17, cysteine 21, cysteine 48, cysteine 51, cysteine 54, and cysteine 58.

As to quaternary structure, the eukaryotic PSI reaction center is composed of at least 11 subunits. [4Fe-4S] cluster serves as cofactor.

The protein resides in the plastid. It localises to the chloroplast thylakoid membrane. The catalysed reaction is reduced [plastocyanin] + hnu + oxidized [2Fe-2S]-[ferredoxin] = oxidized [plastocyanin] + reduced [2Fe-2S]-[ferredoxin]. Apoprotein for the two 4Fe-4S centers FA and FB of photosystem I (PSI); essential for photochemical activity. FB is the terminal electron acceptor of PSI, donating electrons to ferredoxin. The C-terminus interacts with PsaA/B/D and helps assemble the protein into the PSI complex. Required for binding of PsaD and PsaE to PSI. PSI is a plastocyanin/cytochrome c6-ferredoxin oxidoreductase, converting photonic excitation into a charge separation, which transfers an electron from the donor P700 chlorophyll pair to the spectroscopically characterized acceptors A0, A1, FX, FA and FB in turn. The chain is Photosystem I iron-sulfur center from Cyanidium caldarium (Red alga).